The chain runs to 548 residues: Chaperonin GroEL (548 aa).

ATP-binding positions include 30–33, Lys51, 87–91, Gly415, and Asp495; these read TLGP and DGTTT.

Belongs to the chaperonin (HSP60) family. Forms a cylinder of 14 subunits composed of two heptameric rings stacked back-to-back. Interacts with the co-chaperonin GroES.

It is found in the cytoplasm. It catalyses the reaction ATP + H2O + a folded polypeptide = ADP + phosphate + an unfolded polypeptide.. Functionally, together with its co-chaperonin GroES, plays an essential role in assisting protein folding. The GroEL-GroES system forms a nano-cage that allows encapsulation of the non-native substrate proteins and provides a physical environment optimized to promote and accelerate protein folding. This is Chaperonin GroEL from Yersinia pseudotuberculosis serotype O:1b (strain IP 31758).